Consider the following 407-residue polypeptide: Ran GTPase-activating protein 1 (407 aa).

LRR repeat units lie at residues 11–39, 40–67, 68–101, 102–133, 134–166, 167–197, 198–226, 227–256, 257–285, 286–315, and 316–346; these read EEEQ…EELA, ALKT…KCIA, ENTQ…KFLL, PVLL…DYIA, HAVN…LAQN, KKAA…ALGL, KSHS…IHYG, LQYL…KALP, TWKD…KVFT, EVKF…LPAM, and EKGN…LQSK. The interval 353 to 378 is disordered; that stretch reads DDFEEVDSEDEEGEDEEDEDEDEKLE. At Ser-360 the chain carries Phosphoserine.

It belongs to the RNA1 family.

It localises to the cytoplasm. Functionally, GTPase activator for the nuclear Ras-related regulatory protein GSP1 (Ran), converting it to the putatively inactive GDP-bound state. This chain is Ran GTPase-activating protein 1 (RNA1), found in Saccharomyces cerevisiae (strain ATCC 204508 / S288c) (Baker's yeast).